The primary structure comprises 162 residues: Small ribosomal subunit protein bS16 (162 aa).

Residues 113 to 162 are disordered; it reads ADGGPTTEATKPKKKSPAKKAAKAAEPAPQPEQPDTPALGGEQAELTAES. The span at 124-134 shows a compositional bias: basic residues; that stretch reads PKKKSPAKKAA.

Belongs to the bacterial ribosomal protein bS16 family.

This is Small ribosomal subunit protein bS16 from Mycobacterium tuberculosis (strain ATCC 25177 / H37Ra).